The primary structure comprises 177 residues: Putative peroxiredoxin (177 aa).

One can recognise a Thioredoxin domain in the interval 8 to 177 (TAKGNEIPDT…ASIDTILTKV (170 aa)). Catalysis depends on Cys-64, which acts as the Cysteine sulfenic acid (-SOH) intermediate. The Microbody targeting signal signature appears at 175–177 (TKV).

It belongs to the peroxiredoxin family. Prx5 subfamily. As to quaternary structure, homodimer; disulfide-linked, upon oxidation.

It catalyses the reaction a hydroperoxide + [thioredoxin]-dithiol = an alcohol + [thioredoxin]-disulfide + H2O. Thiol-specific peroxidase that catalyzes the reduction of hydrogen peroxide and organic hydroperoxides to water and alcohols, respectively. Plays a role in cell protection against oxidative stress by detoxifying peroxides and as sensor of hydrogen peroxide-mediated signaling events. The protein is Putative peroxiredoxin of Malassezia furfur (Pityriasis versicolor infection agent).